The sequence spans 815 residues: Cilia- and flagella-associated protein 251 (815 aa).

WD repeat units follow at residues 58-99, 103-148, 166-205, 218-257, 271-308, 379-418, 420-460, 463-502, 511-553, and 573-612; these read GHTS…PTRT, PHRH…TPPE, PAGD…PRFQ, QSVG…AQVG, IHNC…VAWF, SLLA…LLGG, AFER…DLYV, NTAA…HTMR, SHHG…VAAG, and SFAP…LERS.

Identified in a spoke-associated complex containing CFAP61, CFAP91 and CFAP251; the complex is associated with the radial spokes in the axoneme. The complex associates with Calmodulin; the association is calcium sensitive.

Its subcellular location is the cytoplasm. The protein localises to the cytoskeleton. The protein resides in the flagellum axoneme. Functionally, as component of a spoke-associated complex, regulates flagellar dynein activity by mediating regulatory signals between the radial spokes and dynein arms. This Chlamydomonas reinhardtii (Chlamydomonas smithii) protein is Cilia- and flagella-associated protein 251.